Here is a 235-residue protein sequence, read N- to C-terminus: Large ribosomal subunit protein uL1 (235 aa).

This sequence belongs to the universal ribosomal protein uL1 family. As to quaternary structure, part of the 50S ribosomal subunit.

Functionally, binds directly to 23S rRNA. The L1 stalk is quite mobile in the ribosome, and is involved in E site tRNA release. Its function is as follows. Protein L1 is also a translational repressor protein, it controls the translation of the L11 operon by binding to its mRNA. This Prochlorococcus marinus (strain MIT 9515) protein is Large ribosomal subunit protein uL1.